Here is a 366-residue protein sequence, read N- to C-terminus: Pectinesterase A (366 aa).

A signal peptide spans 1–24 (MLKTISGTLALSLIIAASVHQAQA). Residues Thr-109 and Gln-153 each coordinate substrate. The Proton donor role is filled by Asp-178. Cys-192 and Cys-212 are oxidised to a cystine. The Nucleophile role is filled by Asp-199. Substrate-binding residues include Arg-219, Asn-226, Tyr-230, Arg-267, Trp-269, and Thr-272.

Belongs to the pectinesterase family. In terms of assembly, monomer.

It is found in the secreted. It catalyses the reaction [(1-&gt;4)-alpha-D-galacturonosyl methyl ester](n) + n H2O = [(1-&gt;4)-alpha-D-galacturonosyl](n) + n methanol + n H(+). Its pathway is glycan metabolism; pectin degradation; 2-dehydro-3-deoxy-D-gluconate from pectin: step 1/5. Functionally, involved in maceration and soft-rotting of plant tissue. The polypeptide is Pectinesterase A (pemA) (Dickeya chrysanthemi (Pectobacterium chrysanthemi)).